Consider the following 305-residue polypeptide: Heme A synthase (305 aa).

At 1 to 6 (MKKFLK) the chain is on the cytoplasmic side. A helical transmembrane segment spans residues 7 to 27 (VWSVLTIICMTVVVFGGALVT). Residues 28–63 (KTGSADGCGNSWPLCNGQLVRLTDVTPEKLIEFMHR) lie on the Extracellular side of the membrane. A disulfide bridge connects residues Cys35 and Cys42. Glu59 is a catalytic residue. Heme o is bound at residue His62. The helical transmembrane segment at 64-84 (MTTGISSIFVIVLAICAWIYM) threads the bilayer. Residues 85 to 92 (KNRRETKP) are Cytoplasmic-facing. A helical membrane pass occupies residues 93–113 (LAIIAVLFLIIQALMGMAAVV). The Extracellular segment spans residues 114-122 (WGQNPYIMA). A helical membrane pass occupies residues 123-143 (LHFGISIICYASIVLLALMIF). His124 is a heme o binding site. Residues 144-160 (EVDRKFDARNLVMGTKL) lie on the Cytoplasmic side of the membrane. The chain crosses the membrane as a helical span at residues 161-181 (RINIYALTIYTYLAVYTGALV). Topologically, residues 182-212 (RHEKASMAVPVWPFENGKFIMPDSVQDYVQY) are extracellular. A helical transmembrane segment spans residues 213–233 (FHRVAAFILIVWLLYVTWLVF). His214 provides a ligand contact to heme b. Topologically, residues 234-240 (RDYRRYR) are cytoplasmic. Residues 241–261 (VLTFSMVLSLLFIALQAVTGA) traverse the membrane as a helical segment. Over 262 to 271 (LSVYTGVNLY) the chain is Extracellular. The helical transmembrane segment at 272–292 (IALAHSLIITMLFALLCYLCL) threads the bilayer. Residue His276 coordinates heme b. The Cytoplasmic segment spans residues 293–305 (LASRSKSNRLRIK).

This sequence belongs to the COX15/CtaA family. Type 1 subfamily. In terms of assembly, interacts with CtaB. The cofactor is heme b.

The protein localises to the cell membrane. The catalysed reaction is Fe(II)-heme o + 2 A + H2O = Fe(II)-heme a + 2 AH2. Its pathway is porphyrin-containing compound metabolism; heme A biosynthesis; heme A from heme O: step 1/1. Its function is as follows. Catalyzes the conversion of heme O to heme A by two successive hydroxylations of the methyl group at C8. The first hydroxylation forms heme I, the second hydroxylation results in an unstable dihydroxymethyl group, which spontaneously dehydrates, resulting in the formyl group of heme A. This Listeria welshimeri serovar 6b (strain ATCC 35897 / DSM 20650 / CCUG 15529 / CIP 8149 / NCTC 11857 / SLCC 5334 / V8) protein is Heme A synthase.